The sequence spans 286 residues: Puff II/9-2 protein (286 aa).

Residues 1–19 (MKQFIVLTVVLLAIQELQG) form the signal peptide. Residues 61-235 (IDGLKKENNI…EKDLNTLRCE (175 aa)) form a helical region. The N-linked (GlcNAc...) asparagine glycan is linked to Asn156.

In Bradysia coprophila (Dark-winged fungus gnat), this protein is Puff II/9-2 protein (II/9-2).